Reading from the N-terminus, the 510-residue chain is ATP synthase subunit alpha, chloroplastic (510 aa).

170 to 177 (GDRQTGKT) provides a ligand contact to ATP.

This sequence belongs to the ATPase alpha/beta chains family. F-type ATPases have 2 components, CF(1) - the catalytic core - and CF(0) - the membrane proton channel. CF(1) has five subunits: alpha(3), beta(3), gamma(1), delta(1), epsilon(1). CF(0) has four main subunits: a, b, b' and c.

It localises to the plastid. Its subcellular location is the chloroplast thylakoid membrane. It catalyses the reaction ATP + H2O + 4 H(+)(in) = ADP + phosphate + 5 H(+)(out). Produces ATP from ADP in the presence of a proton gradient across the membrane. The alpha chain is a regulatory subunit. This is ATP synthase subunit alpha, chloroplastic from Lotus japonicus (Lotus corniculatus var. japonicus).